Here is a 364-residue protein sequence, read N- to C-terminus: Adenosine 3'-phospho 5'-phosphosulfate transporter 2 (364 aa).

The next 10 helical transmembrane spans lie at 39-59, 74-94, 106-126, 131-151, 157-177, 187-206, 231-251, 257-277, 281-301, and 310-330; these read WLQF…YGYM, WTLT…ECII, IYGV…ASVG, PTQV…GILI, GWID…FTLA, SRGY…IGNI, VFIF…PFFL, TFGY…VVLT, VFGA…TIIL, and FTIE…LNLY.

The protein belongs to the nucleotide-sugar transporter family. SLC35B subfamily.

It localises to the golgi apparatus membrane. In terms of biological role, mediates the transport of adenosine 3'-phospho 5'-phosphosulfate (PAPS), from cytosol into Golgi. PAPS is a universal sulfuryl donor for sulfation events that take place in the Golgi. This Caenorhabditis elegans protein is Adenosine 3'-phospho 5'-phosphosulfate transporter 2 (pst-2).